Consider the following 994-residue polypeptide: Receptor-like protein 6 (994 aa).

A signal peptide spans 1–25; it reads MTGLYSSMSFFLRTIVLLFSTSSFC. Topologically, residues 26–946 are extracellular; sequence NTFASLTQDS…SSSSSSEEDE (921 aa). N-linked (GlcNAc...) asparagine glycosylation is found at Asn-116, Asn-134, and Asn-154. LRR repeat units follow at residues 122-146, 148-171, 174-199, 205-228, 230-253, 254-278, 280-301, 302-325, 326-349, 350-373, 375-397, 398-421, 423-445, 446-471, 477-497, 498-520, 521-544, 546-569, and 571-595; these read LQHL…EFSK, MRLE…LLQL, LVSL…LFLH, FMNL…EFSY, WSLR…VLLI, PNLE…LRNN, LLKL…ISNL, KHLT…LRSL, SHLS…VSNL, KQLT…LLNL, QLRY…ISQL, SNLE…LFNI, SLTT…NISL, LHNL…VFLS, SLAL…SEFS, SHLE…IRNQ, RNLS…LWRL, ELST…ALSG, and KIVM…GIQY. 2 N-linked (GlcNAc...) asparagine glycosylation sites follow: Asn-277 and Asn-287. N-linked (GlcNAc...) asparagine glycans are attached at residues Asn-420, Asn-435, and Asn-442. A glycan (N-linked (GlcNAc...) asparagine) is linked at Asn-489. Residues Asn-522, Asn-554, and Asn-561 are each glycosylated (N-linked (GlcNAc...) asparagine). Residues 597–613 form an LRR 20; degenerate repeat; it reads LGSYNNFTGYIPPSICG. Asn-602 carries an N-linked (GlcNAc...) asparagine glycan. LRR repeat units follow at residues 614–637, 639–663, 665–687, 689–710, 711–737, 739–762, 803–827, 828–851, 852–875, and 877–900; these read LANP…CLEA, MSSL…FMNA, VLSS…LAGC, ALEI…WLNS, LPKL…VWFG, PLLR…YFMN, LTKY…VGIL, KELH…LANL, TNLE…LGTL, and SLEW…QFHR. Asn-649 carries an N-linked (GlcNAc...) asparagine glycan. Asn-701 carries an N-linked (GlcNAc...) asparagine glycan. Asn-762 carries an N-linked (GlcNAc...) asparagine glycan. N-linked (GlcNAc...) asparagine glycosylation is found at Asn-834 and Asn-850. Asn-882 and Asn-902 each carry an N-linked (GlcNAc...) asparagine glycan. A helical transmembrane segment spans residues 947–967; the sequence is LISWIAACLGFAPGMVFGLTM. Residues 968-994 are Cytoplasmic-facing; the sequence is GYIMTSHKHEWFMDTFGRRKGRSTRTR.

It belongs to the RLP family.

The protein resides in the cell membrane. This is Receptor-like protein 6 from Arabidopsis thaliana (Mouse-ear cress).